Reading from the N-terminus, the 30-residue chain is 80 kDa carcinoembryonic antigen-binding protein (30 aa).

As to quaternary structure, binds to carcinoembryonic antigen (CEA). The N-terminus is blocked.

It localises to the cell membrane. Functionally, may play a role in the development of hepatic metastases from colorectal cancers. In Rattus norvegicus (Rat), this protein is 80 kDa carcinoembryonic antigen-binding protein.